A 703-amino-acid polypeptide reads, in one-letter code: MEKFVLFAPLIASLIAGLGWRAIGEKAAQYLTTGVLFLSCLISWYLFLSFDGVPRHIPVLDWVVTGDFHAEWAIRLDRLTAIMLIVVTTVSALVHMYSLGYMAHDDNWTHDEHYKARFFAYLSFFTFAMLMLVTADNLLQMFFGWEGVGVASYLLIGFYYKKASANAAAMKAFIVNRVGDFGFLLGIFGIYWLTGSVQFDEIFRQVPQLAQTEIDFLWRDWNAANLLGFLLFVGAMGKSAQLLLHTWLPDAMEGPTPVSALIHAATMVTAGVFLVCRMSPLYEFAPDAKNFIVIIGATTAFFAATVGLVQNDIKRVIAYSTCSQLGYMFVAAGVGVYSAAMFHLLTHAFFKAMLFLGAGSVIHAMHHEQDMRNYGGLRKKIPLTFWAMMIGTFAITGVGIPLTHLGFAGFLSKDAIIESAYAGSGYAFWLLVIAACFTSFYSWRLIFLTFYGKPRGDHHAHDHAHESPPVMTIPLGVLAIGAVFAGMVWYGPFFGDHHKVTEYFHIAGAHHEAAEGEEAEHATAEAPVEHAVADTATAEGEAAAEAEHAEIAAPVGGAIYMHPDNHIMDEAHHAPAWVKVSPFVAMVLGLITAWTFYIANPSLPRRLAAHEPALYRFLLNKWYFDEIYEFIFVRPAKWLGRVLWKGGDGAVIDGTINGVAMGLIPRLTRAAVRVQSGYLFHYAFAMVLGIVGLLIWVMMRGAH.

Helical transmembrane passes span 4–24, 30–50, 79–99, 116–136, 138–158, 179–199, 224–244, 256–276, 290–310, 325–345, 346–366, 381–401, 415–435, 475–495, 580–600, and 679–699; these read FVLF…RAIG, YLTT…FLSF, LTAI…MYSL, ARFF…VTAD, LLQM…LIGF, GDFG…SVQF, ANLL…QLLL, TPVS…FLVC, NFIV…GLVQ, LGYM…FHLL, THAF…HAMH, IPLT…VGIP, AIIE…VIAA, LGVL…PFFG, VSPF…YIAN, and LFHY…WVMM.

This sequence belongs to the complex I subunit 5 family. NDH-1 is composed of at least 14 different subunits, Nqo1 to Nqo14. The complex has a L-shaped structure, with the hydrophobic arm (subunits Nqo7, Nqo8, Nqo10 to Nqo14) embedded in the inner membrane and the hydrophilic peripheral arm (subunits Nqo1 to Nqo6, Nqo9) protruding into the bacterial cytoplasm. The hydrophilic domain contains all the redox centers.

The protein resides in the cell inner membrane. It carries out the reaction a quinone + NADH + 5 H(+)(in) = a quinol + NAD(+) + 4 H(+)(out). NDH-1 shuttles electrons from NADH, via FMN and iron-sulfur (Fe-S) centers, to quinones in the respiratory chain. The immediate electron acceptor for the enzyme in this species is believed to be ubiquinone. Couples the redox reaction to proton translocation (for every two electrons transferred, four hydrogen ions are translocated across the cytoplasmic membrane), and thus conserves the redox energy in a proton gradient. The sequence is that of NADH-quinone oxidoreductase chain 12 from Paracoccus denitrificans.